Here is a 344-residue protein sequence, read N- to C-terminus: MNSITDVGGIRVGHYQRLDPDASLGAGWACGVTVVLPPPGTVGAVDCRGGAPGTRETDLLDPANSVRFVDALLLAGGSAYGLAAADGVMRWLEEHRRGVAMDSGVVPIVPGAVIFDLPVGGWNCRPTADFGYSACAAAGVDVAVGTVGVGVGARAGALKGGVGTASATLQSGVTVGVLAVVNAAGNVVDPATGLPWMADLVGEFALRAPPAEQIAALAQLSSPLGAFNTPFNTTIGVIACDAALSPAACRRIAIAAHDGLARTIRPAHTPLDGDTVFALATGAVAVPPEAGVPAALSPETQLVTAVGAAAADCLARAVLAGVLNAQPVAGIPTYRDMFPGAFGS.

8 consecutive transmembrane segments (helical) span residues 25–45 (GAGWACGVTVVLPPPGTVGAV), 68–88 (FVDALLLAGGSAYGLAAADGV), 104–124 (GVVPIVPGAVIFDLPVGGWNC), 133–153 (SACAAAGVDVAVGTVGVGVGA), 161–181 (GVGTASATLQSGVTVGVLAVV), 224–244 (LGAFNTPFNTTIGVIACDAAL), 276–296 (VFALATGAVAVPPEAGVPAAL), and 302–322 (LVTAVGAAAADCLARAVLAGV).

Belongs to the peptidase S58 family.

The protein resides in the cell membrane. Its function is as follows. Aminopeptidase. This is an uncharacterized protein from Mycobacterium bovis (strain ATCC BAA-935 / AF2122/97).